A 58-amino-acid chain; its full sequence is Short neurotoxin MS11 (58 aa).

Intrachain disulfides connect C3/C20, C13/C38, C42/C50, and C51/C56.

Belongs to the three-finger toxin family. Short-chain subfamily. Expressed by the venom gland.

The protein localises to the secreted. Produces peripheral paralysis by blocking neuromuscular transmission at the postsynaptic site. Binds to and inhibits the endogenous nicotinic acetylcholine receptors (nAChR) in the human rhabdomyosarcoma TE 671 cell line with an IC(50) of 266 mM. Not toxic to mice by intraperitoneal injection or to zebrafish by injection at the back dorsolateral region. In Micrurus surinamensis (Surinam coral snake), this protein is Short neurotoxin MS11.